Consider the following 381-residue polypeptide: GDSL esterase/lipase At3g48460 (381 aa).

Residues 1–26 form the signal peptide; that stretch reads MSSSISPLLTTAISVAILLFSTISTA. Ser-45 acts as the Nucleophile in catalysis. Residues Asn-112, Asn-140, and Asn-258 are each glycosylated (N-linked (GlcNAc...) asparagine). Catalysis depends on residues Asp-344 and His-347.

It belongs to the 'GDSL' lipolytic enzyme family.

It is found in the secreted. The protein is GDSL esterase/lipase At3g48460 of Arabidopsis thaliana (Mouse-ear cress).